Consider the following 1603-residue polypeptide: Pentafunctional AROM polypeptide (1603 aa).

Residues 1–384 (MGVPTKISIL…YEPRASTVSN (384 aa)) are 3-dehydroquinate synthase. Residues 44-46 (DTN), 81-84 (ESSK), 114-116 (GGV), and Asp-119 contribute to the NAD(+) site. Arg-130 is a binding site for 7-phospho-2-dehydro-3-deoxy-D-arabino-heptonate. 139–140 (TT) provides a ligand contact to NAD(+). The 7-phospho-2-dehydro-3-deoxy-D-arabino-heptonate site is built by Asp-146 and Lys-152. Lys-161 contributes to the NAD(+) binding site. Residue Asn-162 participates in 7-phospho-2-dehydro-3-deoxy-D-arabino-heptonate binding. NAD(+)-binding positions include 179-182 (FLNT) and Asn-190. Glu-194 lines the Zn(2+) pocket. 7-phospho-2-dehydro-3-deoxy-D-arabino-heptonate is bound by residues 194 to 197 (EVIK) and Lys-250. The Proton acceptor; for 3-dehydroquinate synthase activity role is filled by Glu-260. 7-phospho-2-dehydro-3-deoxy-D-arabino-heptonate contacts are provided by residues 264 to 268 (RNLLN) and His-271. His-271 contacts Zn(2+). His-275 functions as the Proton acceptor; for 3-dehydroquinate synthase activity in the catalytic mechanism. The 7-phospho-2-dehydro-3-deoxy-D-arabino-heptonate site is built by His-287 and Lys-356. His-287 lines the Zn(2+) pocket. Residues 397–842 (VYPGFPKSLN…WNTLAQTFKV (446 aa)) are EPSP synthase. The active-site For EPSP synthase activity is Cys-824. Positions 872 to 1064 (AASIFIIGMR…RRKENTFFVS (193 aa)) are shikimate kinase. 879-886 (GMRGAGKT) contacts ATP. The segment at 1065–1285 (LTFPDLTPAS…AAPGQLSARE (221 aa)) is 3-dehydroquinase. Residue His-1188 is the Proton acceptor; for 3-dehydroquinate dehydratase activity of the active site. Catalysis depends on Lys-1216, which acts as the Schiff-base intermediate with substrate; for 3-dehydroquinate dehydratase activity. Positions 1298–1603 (AKKFAVIGKP…GVSSSDDTIS (306 aa)) are shikimate dehydrogenase.

The protein in the N-terminal section; belongs to the sugar phosphate cyclases superfamily. Dehydroquinate synthase family. This sequence in the 2nd section; belongs to the EPSP synthase family. It in the 3rd section; belongs to the shikimate kinase family. In the 4th section; belongs to the type-I 3-dehydroquinase family. The protein in the C-terminal section; belongs to the shikimate dehydrogenase family. In terms of assembly, homodimer. Zn(2+) is required as a cofactor.

The protein localises to the cytoplasm. It catalyses the reaction 7-phospho-2-dehydro-3-deoxy-D-arabino-heptonate = 3-dehydroquinate + phosphate. The enzyme catalyses 3-dehydroquinate = 3-dehydroshikimate + H2O. It carries out the reaction shikimate + NADP(+) = 3-dehydroshikimate + NADPH + H(+). The catalysed reaction is shikimate + ATP = 3-phosphoshikimate + ADP + H(+). It catalyses the reaction 3-phosphoshikimate + phosphoenolpyruvate = 5-O-(1-carboxyvinyl)-3-phosphoshikimate + phosphate. Its pathway is metabolic intermediate biosynthesis; chorismate biosynthesis; chorismate from D-erythrose 4-phosphate and phosphoenolpyruvate: step 2/7. The protein operates within metabolic intermediate biosynthesis; chorismate biosynthesis; chorismate from D-erythrose 4-phosphate and phosphoenolpyruvate: step 3/7. It functions in the pathway metabolic intermediate biosynthesis; chorismate biosynthesis; chorismate from D-erythrose 4-phosphate and phosphoenolpyruvate: step 4/7. It participates in metabolic intermediate biosynthesis; chorismate biosynthesis; chorismate from D-erythrose 4-phosphate and phosphoenolpyruvate: step 5/7. Its pathway is metabolic intermediate biosynthesis; chorismate biosynthesis; chorismate from D-erythrose 4-phosphate and phosphoenolpyruvate: step 6/7. Functionally, the AROM polypeptide catalyzes 5 consecutive enzymatic reactions in prechorismate polyaromatic amino acid biosynthesis. This Paracoccidioides brasiliensis (strain Pb03) protein is Pentafunctional AROM polypeptide.